Here is a 450-residue protein sequence, read N- to C-terminus: MNSPWKAEASRIALVSLGCDKNRVDGEVMLGLLERAGYQITAELEADIILVNTCAFIQDAKQESIEAILETARYRGNGRCRVLLATGCLAQRYPDELLRDIPELDGVVGTGEVGRVVDIVRRAATGERVREVGPPGFLGREVLPRVPSGSPFTAYLKISEGCDNRCLYCVIPQLRGPYRSREASVLVREARALAARGAREIVLVAQDTTRYGSDLKERTSLTDLVSRLAALEGVAWIRLLYCYPSGITFELVELMAREPRLCRYLDIPLQHASDRVLRRMGRSTMSYDLRKLILFLRSAIPGLTIRSTFMVGFPGETEADFEELLGFLKAMKLDRAGFFAYSREEGTPAARMPDQVPPEVKRERLERAAAVQREVSRALNRARVGSEVTVLVEGRKGEQYYGRSEADAPDIDGRVFLSAASDLEPGTFVRARITGAGPYDLRARVLSTLP.

Residues 10–125 (SRIALVSLGC…VVDIVRRAAT (116 aa)) enclose the MTTase N-terminal domain. [4Fe-4S] cluster is bound by residues Cys-19, Cys-54, Cys-88, Cys-162, Cys-166, and Cys-169. The 231-residue stretch at 148–378 (SGSPFTAYLK…AAVQREVSRA (231 aa)) folds into the Radical SAM core domain. One can recognise a TRAM domain in the interval 381-447 (RARVGSEVTV…PYDLRARVLS (67 aa)).

It belongs to the methylthiotransferase family. RimO subfamily. [4Fe-4S] cluster is required as a cofactor.

The protein resides in the cytoplasm. It catalyses the reaction L-aspartate(89)-[ribosomal protein uS12]-hydrogen + (sulfur carrier)-SH + AH2 + 2 S-adenosyl-L-methionine = 3-methylsulfanyl-L-aspartate(89)-[ribosomal protein uS12]-hydrogen + (sulfur carrier)-H + 5'-deoxyadenosine + L-methionine + A + S-adenosyl-L-homocysteine + 2 H(+). Its function is as follows. Catalyzes the methylthiolation of an aspartic acid residue of ribosomal protein uS12. The polypeptide is Ribosomal protein uS12 methylthiotransferase RimO (Desulforudis audaxviator (strain MP104C)).